The following is a 240-amino-acid chain: C-type lectin domain family 4 member A (240 aa).

Over 1-48 the chain is Cytoplasmic; that stretch reads MASEITYAEVRIKNESNSSVTYSGSPAAPREKPTRHLSKPGSLLVPFT. Positions 5 to 10 match the ITIM motif motif; the sequence is ITYAEV. The interval 18-38 is disordered; the sequence is SSVTYSGSPAAPREKPTRHLS. Residues 49–69 form a helical; Signal-anchor for type II membrane protein membrane-spanning segment; sequence SLMVLLLLLAITFLVAFIIYF. The Extracellular portion of the chain corresponds to 70–240; that stretch reads QKYSQFLEEK…SVCQMKKIQL (171 aa). Disulfide bonds link Cys-107–Cys-118, Cys-140–Cys-233, and Cys-208–Cys-225. The 107-residue stretch at 129–235 folds into the C-type lectin domain; that stretch reads SKASWSESEK…SGKQQSVCQM (107 aa). Ca(2+)-binding residues include Val-149 and Glu-155. Residue Asn-190 is glycosylated (N-linked (GlcNAc...) asparagine). Positions 200, 202, and 206 each coordinate Ca(2+). Residues 200-202 and Glu-206 contribute to the alpha-D-mannopyranose site; that span reads EPS. An N-acetyl-D-glucosamine-binding site is contributed by 211–213; that stretch reads INH. Ca(2+) is bound by residues Asn-221 and Asp-222.

As to quaternary structure, may interact with PTPN6 via its ITIM site. In terms of tissue distribution, expressed by myeloid cells (dendritic cells, macrophages, and neutrophils) and B-cells.

The protein resides in the cell membrane. Functionally, C-type lectin receptor that binds carbohydrates mannose and fucose but also weakly interacts with N-acetylglucosamine (GlcNAc) in a Ca(2+)-dependent manner. Involved in regulating immune reactivity. Once triggered by antigen, it is internalized by clathrin-dependent endocytosis and delivers its antigenic cargo into the antigen presentation pathway resulting in cross-priming of CD8(+) T cells. This cross-presentation and cross-priming are enhanced by TLR7 and TLR8 agonists with increased expansion of the CD8(+) T cells, high production of IFNG and TNF with reduced levels of IL4, IL5 and IL13. In plasmacytoid dendritic cells, inhibits TLR9-mediated IFNA and TNF production. May be involved via its ITIM motif (immunoreceptor tyrosine-based inhibitory motifs) in the inhibition of B-cell-receptor-mediated calcium mobilization and protein tyrosine phosphorylation. The sequence is that of C-type lectin domain family 4 member A (Clec4a) from Rattus norvegicus (Rat).